Here is a 929-residue protein sequence, read N- to C-terminus: Collagen alpha-1(XII) chain (929 aa).

In terms of domain architecture, VWFA 1 spans 1 to 49; it reads DVEIFAVGVKDAVRSELEAIATPPTATHVYTVEDFDAFQRISFELTQSI. Fibronectin type-III domains are found at residues 67–156, 158–250, 251–340, 342–432, 434–521, and 523–613; these read PPRD…LEVR, APRN…VGEP, KNLR…LQER, SPRD…ASPD, KIVK…LSPF, and APRS…TLRD. Residue asparagine 98 is glycosylated (N-linked (GlcNAc...) asparagine). O-linked (Xyl...) (chondroitin sulfate) serine glycans are attached at residues serine 231, serine 324, and serine 415. Positions 633 to 805 constitute a VWFA 2 domain; that stretch reads DIVLLVDGSW…SLLTNIVNDL (173 aa). The region spanning 821-910 is the Fibronectin type-III 7 domain; that stretch reads PPSNLVTSEP…AGTETTLPIP (90 aa).

Belongs to the fibril-associated collagens with interrupted helices (FACIT) family. Trimer of identical chains each containing 190 kDa of non-triple-helical sequences. In terms of processing, the triple-helical tail is stabilized by disulfide bonds at each end. Prolines at the third position of the tripeptide repeating unit (G-X-Y) are hydroxylated in some or all of the chains.

Its subcellular location is the secreted. It localises to the extracellular space. It is found in the extracellular matrix. Its function is as follows. Type XII collagen interacts with type I collagen-containing fibrils, the COL1 domain could be associated with the surface of the fibrils, and the COL2 and NC3 domains may be localized in the perifibrillar matrix. Could play a developmental role in regeneration. In Notophthalmus viridescens (Eastern newt), this protein is Collagen alpha-1(XII) chain.